A 338-amino-acid polypeptide reads, in one-letter code: Phenylalanine--tRNA ligase alpha subunit (338 aa).

Residue Glu252 coordinates Mg(2+).

It belongs to the class-II aminoacyl-tRNA synthetase family. Phe-tRNA synthetase alpha subunit type 1 subfamily. Tetramer of two alpha and two beta subunits. Mg(2+) is required as a cofactor.

The protein localises to the cytoplasm. It catalyses the reaction tRNA(Phe) + L-phenylalanine + ATP = L-phenylalanyl-tRNA(Phe) + AMP + diphosphate + H(+). In Pseudomonas entomophila (strain L48), this protein is Phenylalanine--tRNA ligase alpha subunit.